The sequence spans 253 residues: Retinoic acid early-inducible protein 1-beta (253 aa).

The first 28 residues, 1-28, serve as a signal peptide directing secretion; that stretch reads MAKAAVTKRHHFMIQKLLILLSYGYTNG. Cys-37 and Cys-56 are joined by a disulfide. 5 N-linked (GlcNAc...) asparagine glycosylation sites follow: Asn-38, Asn-70, Asn-83, Asn-143, and Asn-156. Cysteines 90 and 190 form a disulfide. The segment at 198 to 230 is disordered; the sequence is LKQSKEKPRSTSRSPSITQLTSTSPLPPPSHST. Residues 211–221 are compositionally biased toward low complexity; the sequence is SPSITQLTSTS. Ser-229 carries the GPI-anchor amidated serine lipid modification. A propeptide spans 230-253 (removed in mature form); sequence TSKKGFISVGLIFISLLFAFAFAM.

Belongs to the NKG2D ligand family. Glycosylated. As to expression, expressed predominantly in embryonic brain.

The protein resides in the cell membrane. Its function is as follows. Acts as a ligand for KLRK1. The sequence is that of Retinoic acid early-inducible protein 1-beta (Raet1b) from Mus musculus (Mouse).